Here is a 59-residue protein sequence, read N- to C-terminus: UPF0434 protein GOX0764 (59 aa).

The protein belongs to the UPF0434 family.

The chain is UPF0434 protein GOX0764 from Gluconobacter oxydans (strain 621H) (Gluconobacter suboxydans).